A 254-amino-acid polypeptide reads, in one-letter code: Phosphate import ATP-binding protein PstB 2 (254 aa).

One can recognise an ABC transporter domain in the interval 9 to 249; sequence FNIDNLNLFY…PRDDRTRGYV (241 aa). 41–48 contributes to the ATP binding site; sequence GPSGCGKS.

The protein belongs to the ABC transporter superfamily. Phosphate importer (TC 3.A.1.7) family. The complex is composed of two ATP-binding proteins (PstB), two transmembrane proteins (PstC and PstA) and a solute-binding protein (PstS).

Its subcellular location is the cell inner membrane. The enzyme catalyses phosphate(out) + ATP + H2O = ADP + 2 phosphate(in) + H(+). In terms of biological role, part of the ABC transporter complex PstSACB involved in phosphate import. Responsible for energy coupling to the transport system. The polypeptide is Phosphate import ATP-binding protein PstB 2 (Photobacterium profundum (strain SS9)).